The sequence spans 437 residues: Trigger factor (437 aa).

Positions 161–246 (DDQVNIDFVG…VNSVSAPVLP (86 aa)) constitute a PPIase FKBP-type domain.

The protein belongs to the FKBP-type PPIase family. Tig subfamily.

The protein localises to the cytoplasm. It carries out the reaction [protein]-peptidylproline (omega=180) = [protein]-peptidylproline (omega=0). In terms of biological role, involved in protein export. Acts as a chaperone by maintaining the newly synthesized protein in an open conformation. Functions as a peptidyl-prolyl cis-trans isomerase. In Pseudomonas putida (strain ATCC 47054 / DSM 6125 / CFBP 8728 / NCIMB 11950 / KT2440), this protein is Trigger factor.